A 79-amino-acid polypeptide reads, in one-letter code: MVSKKNKIVAALLAFFFGGLGIHKFYLGRVGQGILYILFCWTGIPSIIAFIEFIIFLCGSEEGFDQKYNFYYFQQQSKA.

One can recognise a TM2 domain in the interval Ser3–Ile54. The next 2 membrane-spanning stretches (helical) occupy residues Ile8–Gly28 and Ile37–Leu57.

The protein resides in the cell membrane. This is an uncharacterized protein from Bacillus subtilis (strain 168).